We begin with the raw amino-acid sequence, 231 residues long: Large ribosomal subunit protein uL1 (231 aa).

Belongs to the universal ribosomal protein uL1 family. In terms of assembly, part of the 50S ribosomal subunit.

Functionally, binds directly to 23S rRNA. The L1 stalk is quite mobile in the ribosome, and is involved in E site tRNA release. Protein L1 is also a translational repressor protein, it controls the translation of the L11 operon by binding to its mRNA. This chain is Large ribosomal subunit protein uL1, found in Methylococcus capsulatus (strain ATCC 33009 / NCIMB 11132 / Bath).